An 883-amino-acid chain; its full sequence is Phosphoenolpyruvate carboxylase (883 aa).

Active-site residues include H138 and K546.

This sequence belongs to the PEPCase type 1 family. The cofactor is Mg(2+).

The catalysed reaction is oxaloacetate + phosphate = phosphoenolpyruvate + hydrogencarbonate. Forms oxaloacetate, a four-carbon dicarboxylic acid source for the tricarboxylic acid cycle. The chain is Phosphoenolpyruvate carboxylase from Escherichia coli O45:K1 (strain S88 / ExPEC).